Reading from the N-terminus, the 98-residue chain is NADH-ubiquinone oxidoreductase chain 4L (98 aa).

3 helical membrane passes run 2 to 22 (SLVYVNIMIAFSVSFLGLLMF), 29 to 49 (SLLCLEGMMLSLFILGTILIL), and 61 to 81 (IIMLVFAACEAAVGLSLLVMV).

This sequence belongs to the complex I subunit 4L family. Core subunit of respiratory chain NADH dehydrogenase (Complex I) which is composed of 45 different subunits.

The protein resides in the mitochondrion inner membrane. The enzyme catalyses a ubiquinone + NADH + 5 H(+)(in) = a ubiquinol + NAD(+) + 4 H(+)(out). Core subunit of the mitochondrial membrane respiratory chain NADH dehydrogenase (Complex I) which catalyzes electron transfer from NADH through the respiratory chain, using ubiquinone as an electron acceptor. Part of the enzyme membrane arm which is embedded in the lipid bilayer and involved in proton translocation. In Galemys pyrenaicus (Iberian desman), this protein is NADH-ubiquinone oxidoreductase chain 4L (MT-ND4L).